The primary structure comprises 110 residues: Cytochrome c6 (110 aa).

Positions 1-25 are cleaved as a signal peptide; it reads MKKTLSVLFTAFSFCVIGFTQVAFA. Heme c-binding residues include cysteine 39, cysteine 42, histidine 43, and methionine 83.

This sequence belongs to the cytochrome c family. PetJ subfamily. As to quaternary structure, monomer. Binds 1 heme c group covalently per subunit.

It localises to the plastid. The protein localises to the chloroplast thylakoid lumen. Functions as an electron carrier between membrane-bound cytochrome b6-f and photosystem I in oxygenic photosynthesis. This is Cytochrome c6 (petJ) from Porphyra purpurea (Red seaweed).